The sequence spans 518 residues: ATP synthase F(1) complex catalytic subunit beta, mitochondrial (518 aa).

Gly199, Val200, Gly201, Lys202, Thr203, and Val204 together coordinate ADP. ATP is bound at residue Gly199. Phosphate contacts are provided by Gly199, Val200, Gly201, Lys202, and Thr203. Residues Gly201, Lys202, Thr203, and Val204 each coordinate ATP. Mg(2+) is bound at residue Thr203. Residue Glu228 coordinates Mg(2+). An ATP-binding site is contributed by Arg229.

Belongs to the ATPase alpha/beta chains family. As to quaternary structure, homotrimer. Component of the ATP synthase complex composed at least of ATP5F1A/subunit alpha, ATP5F1B/subunit beta, ATP5MC1/subunit c (homooctomer), MT-ATP6/subunit a, MT-ATP8/subunit 8, ATP5ME/subunit e, ATP5MF/subunit f, ATP5MG/subunit g, ATP5MK/subunit k, ATP5MJ/subunit j, ATP5F1C/subunit gamma, ATP5F1D/subunit delta, ATP5F1E/subunit epsilon, ATP5PF/subunit F6, ATP5PB/subunit b, ATP5PD/subunit d, ATP5PO/subunit OSCP. ATP synthase complex consists of a soluble F(1) head domain (subunits alpha(3) and beta(3)) - the catalytic core - and a membrane F(0) domain - the membrane proton channel (subunits c, a, 8, e, f, g, k and j). These two domains are linked by a central stalk (subunits gamma, delta, and epsilon) rotating inside the F1 region and a stationary peripheral stalk (subunits F6, b, d, and OSCP).

The protein resides in the mitochondrion inner membrane. It carries out the reaction ATP + H2O + 4 H(+)(in) = ADP + phosphate + 5 H(+)(out). Catalytic subunit beta, of the mitochondrial membrane ATP synthase complex (F(1)F(0) ATP synthase or Complex V) that produces ATP from ADP in the presence of a proton gradient across the membrane which is generated by electron transport complexes of the respiratory chain. ATP synthase complex consist of a soluble F(1) head domain - the catalytic core - and a membrane F(1) domain - the membrane proton channel. These two domains are linked by a central stalk rotating inside the F(1) region and a stationary peripheral stalk. During catalysis, ATP synthesis in the catalytic domain of F(1) is coupled via a rotary mechanism of the central stalk subunits to proton translocation. In vivo, can only synthesize ATP although its ATP hydrolase activity can be activated artificially in vitro. With the subunit alpha (ATP5F1A), forms the catalytic core in the F(1) domain. This is ATP synthase F(1) complex catalytic subunit beta, mitochondrial from Cyprinus carpio (Common carp).